The following is a 604-amino-acid chain: ATPase family AAA domain-containing protein 3A homolog (604 aa).

The interval 1–50 (MSWLLGRNRQQPQPDQTAGFSEGGGAADPEGRTAGEKSGDSQLSRAERKA) is disordered. Polar residues predominate over residues 8–19 (NRQQPQPDQTAG). The span at 29-50 (PEGRTAGEKSGDSQLSRAERKA) shows a compositional bias: basic and acidic residues. Positions 62-221 (ERAADAAKTL…INLEKIRLKA (160 aa)) form a coiled coil. 358 to 365 (GPPGTGKT) is a binding site for ATP.

As to quaternary structure, can form homooligomers.

The protein resides in the mitochondrion inner membrane. Its subcellular location is the mitochondrion matrix. It is found in the mitochondrion nucleoid. Its function is as follows. Required to maintain the proper number of mitochondria in neurons and muscles. In Drosophila melanogaster (Fruit fly), this protein is ATPase family AAA domain-containing protein 3A homolog.